The chain runs to 234 residues: Large ribosomal subunit protein uL1 (234 aa).

Belongs to the universal ribosomal protein uL1 family. As to quaternary structure, part of the 50S ribosomal subunit.

Functionally, binds directly to 23S rRNA. The L1 stalk is quite mobile in the ribosome, and is involved in E site tRNA release. In terms of biological role, protein L1 is also a translational repressor protein, it controls the translation of the L11 operon by binding to its mRNA. This chain is Large ribosomal subunit protein uL1, found in Anaeromyxobacter sp. (strain Fw109-5).